A 238-amino-acid polypeptide reads, in one-letter code: 14-3-3 family protein artA (238 aa).

Belongs to the 14-3-3 family.

Its function is as follows. 14-3-3 family protein that plays a role in the morphological differentiation and secondary metabolism biosynthesis. Required for normal fungal morphogenesis in an environment-dependent manner, affecting the balance between production of conidiophores and the formation of sclerotia, resistant structures that are necessary for the dissemination and survival. Acts as a positive regulator of conidiation and a negative regulator of sclerotial production. Also regulates the production of secondary metabolites such as aflatoxin, but also the indole-tetramic acid mycotoxin cyclopiazonic acid (CPA) and ustiloxin, an inhibitor of microtubule assembly. The sequence is that of 14-3-3 family protein artA from Aspergillus flavus (strain ATCC 200026 / FGSC A1120 / IAM 13836 / NRRL 3357 / JCM 12722 / SRRC 167).